We begin with the raw amino-acid sequence, 120 residues long: NAD(P)H-quinone oxidoreductase subunit 3, chloroplastic (120 aa).

The next 3 membrane-spanning stretches (helical) occupy residues 9 to 29 (IFWA…FISG), 64 to 84 (MFAL…PWAM), and 88 to 108 (VLGV…IVGS).

It belongs to the complex I subunit 3 family. NDH is composed of at least 16 different subunits, 5 of which are encoded in the nucleus.

Its subcellular location is the plastid. It is found in the chloroplast thylakoid membrane. The catalysed reaction is a plastoquinone + NADH + (n+1) H(+)(in) = a plastoquinol + NAD(+) + n H(+)(out). The enzyme catalyses a plastoquinone + NADPH + (n+1) H(+)(in) = a plastoquinol + NADP(+) + n H(+)(out). In terms of biological role, NDH shuttles electrons from NAD(P)H:plastoquinone, via FMN and iron-sulfur (Fe-S) centers, to quinones in the photosynthetic chain and possibly in a chloroplast respiratory chain. The immediate electron acceptor for the enzyme in this species is believed to be plastoquinone. Couples the redox reaction to proton translocation, and thus conserves the redox energy in a proton gradient. The chain is NAD(P)H-quinone oxidoreductase subunit 3, chloroplastic from Vitis vinifera (Grape).